Here is a 609-residue protein sequence, read N- to C-terminus: Proteasome-associated ATPase (609 aa).

The disordered stretch occupies residues 1-25; sequence MADSERSEAFGTPDDTPLSSNDAAE. A coiled-coil region spans residues 19–96; it reads SSNDAAELEQ…LREEVDRLGQ (78 aa). Residue 296-301 participates in ATP binding; the sequence is GCGKTL. The segment at 608-609 is docks into pockets in the proteasome alpha-ring; sequence YL.

Belongs to the AAA ATPase family. Homohexamer. Assembles into a hexameric ring structure that caps the 20S proteasome core. Strongly interacts with the prokaryotic ubiquitin-like protein Pup through a hydrophobic interface; the interacting region of ARC lies in its N-terminal coiled-coil domain. There is one Pup binding site per ARC hexamer ring. Upon ATP-binding, the C-terminus of ARC interacts with the alpha-rings of the proteasome core, possibly by binding to the intersubunit pockets.

It functions in the pathway protein degradation; proteasomal Pup-dependent pathway. ATPase which is responsible for recognizing, binding, unfolding and translocation of pupylated proteins into the bacterial 20S proteasome core particle. May be essential for opening the gate of the 20S proteasome via an interaction with its C-terminus, thereby allowing substrate entry and access to the site of proteolysis. Thus, the C-termini of the proteasomal ATPase may function like a 'key in a lock' to induce gate opening and therefore regulate proteolysis. The sequence is that of Proteasome-associated ATPase from Mycobacterium marinum (strain ATCC BAA-535 / M).